We begin with the raw amino-acid sequence, 553 residues long: Putative transport protein AHA_3492 (553 aa).

5 helical membrane passes run 4–24, 29–49, 65–85, 95–115, and 158–178; these read IALSISMLSLVAVLGLWLGNW, VGLGIGGVLFGGIIVGHFAGL, FGLILFVYTIGIQVGPGFFSS, GFAALLVLLGCAVAAALHQLF, and MGYAVAYPFGICGILLTMWLI. 2 RCK C-terminal domains span residues 191 to 276 and 279 to 361; these read AQFE…VLGE and ETSL…VVGN. The next 6 helical transmembrane spans lie at 371–391, 403–425, 439–459, 465–485, 493–513, and 533–553; these read MLPVFIGIGLGVLLGSIPFYL, AGGPLVVALILSRIGSIGKLYWF, IVLFLAVVGFKSGAGFIDTLI, AWMMYGVAITLIPLLVVGVLA, YLTLCGLLAGSMTDPPALAFA, and LVMFLRIISPQLLAILLWAGA.

It belongs to the AAE transporter (TC 2.A.81) family. YidE subfamily.

The protein resides in the cell membrane. This Aeromonas hydrophila subsp. hydrophila (strain ATCC 7966 / DSM 30187 / BCRC 13018 / CCUG 14551 / JCM 1027 / KCTC 2358 / NCIMB 9240 / NCTC 8049) protein is Putative transport protein AHA_3492.